Consider the following 250-residue polypeptide: Isoprenyl transferase (250 aa).

Asp26 is an active-site residue. Position 26 (Asp26) interacts with Mg(2+). Substrate-binding positions include 27–30 (GNGR), Trp31, Arg39, His43, and 71–73 (STE). Asn74 acts as the Proton acceptor in catalysis. Substrate contacts are provided by residues Trp75, Arg77, Arg198, and 204 to 206 (RLS). Glu217 contributes to the Mg(2+) binding site.

Belongs to the UPP synthase family. In terms of assembly, homodimer. Requires Mg(2+) as cofactor.

Its function is as follows. Catalyzes the condensation of isopentenyl diphosphate (IPP) with allylic pyrophosphates generating different type of terpenoids. The sequence is that of Isoprenyl transferase from Streptococcus agalactiae serotype III (strain NEM316).